A 141-amino-acid polypeptide reads, in one-letter code: Large ribosomal subunit protein uL11c (141 aa).

It belongs to the universal ribosomal protein uL11 family. Part of the ribosomal stalk of the 50S ribosomal subunit. Interacts with L10 and the large rRNA to form the base of the stalk. L10 forms an elongated spine to which L12 dimers bind in a sequential fashion forming a multimeric L10(L12)X complex.

The protein resides in the plastid. Its subcellular location is the cyanelle. Forms part of the ribosomal stalk which helps the ribosome interact with GTP-bound translation factors. This Cyanophora paradoxa protein is Large ribosomal subunit protein uL11c.